We begin with the raw amino-acid sequence, 558 residues long: FRIGIDA-like protein 3 (558 aa).

A coiled-coil region spans residues 9–102 (SLMDSTSSKI…ALERLQKKRD (94 aa)). The segment covering 454–463 (AKADKKRATE) has biased composition (basic and acidic residues). Residues 454-494 (AKADKKRATEPMKPQPKRPRGAQPRVTDNNNNINNNKTGYG) form a disordered region.

It belongs to the Frigida family.

The protein is FRIGIDA-like protein 3 (FRL3) of Arabidopsis thaliana (Mouse-ear cress).